Reading from the N-terminus, the 87-residue chain is MMSTQHFILSLTILIIISNLHDEVNACRELGEECVTRGPKSCCEPLICGLKSHGTGVCVKCIPGGSECKKSEDCCSKRCKSGYCKFK.

Residues 1–26 (MMSTQHFILSLTILIIISNLHDEVNA) form the signal peptide. 3 disulfides stabilise this stretch: C61–C75, C68–C79, and C74–C84.

It is found in the secreted. This is an uncharacterized protein from Schistosoma japonicum (Blood fluke).